The chain runs to 539 residues: Glutathione synthetase, chloroplastic (539 aa).

Residues 1 to 61 (MGSGCSSLSY…SPLRCGRSFK (61 aa)) constitute a chloroplast transit peptide. Residue Arg193 participates in substrate binding. Glu209 serves as a coordination point for ATP. Positions 209 and 211 each coordinate Mg(2+). Substrate is bound by residues 213 to 216 (ISCS), 281 to 283 (ERN), Gln287, and 335 to 338 (RSGY). Residues Lys374, 428–437 (KPQREGGGNN), Tyr439, 464–467 (MQRI), and Glu490 contribute to the ATP site. Position 432 (Glu432) interacts with Mg(2+). Arg515 serves as a coordination point for substrate. Residues Lys517 and Glu523 each coordinate ATP. 526–527 (VA) serves as a coordination point for substrate.

The protein belongs to the eukaryotic GSH synthase family. As to quaternary structure, homodimer. Requires Mg(2+) as cofactor.

The protein localises to the plastid. It is found in the chloroplast. It catalyses the reaction gamma-L-glutamyl-L-cysteine + glycine + ATP = glutathione + ADP + phosphate + H(+). The protein operates within sulfur metabolism; glutathione biosynthesis; glutathione from L-cysteine and L-glutamate: step 2/2. The polypeptide is Glutathione synthetase, chloroplastic (GSH2) (Arabidopsis thaliana (Mouse-ear cress)).